We begin with the raw amino-acid sequence, 386 residues long: tRNA N6-adenosine threonylcarbamoyltransferase (386 aa).

The Fe cation site is built by histidine 112 and histidine 116. Substrate is bound by residues 134–138 (LASGG), aspartate 167, glycine 180, and asparagine 322. A Fe cation-binding site is contributed by aspartate 350.

This sequence belongs to the KAE1 / TsaD family. Requires Fe(2+) as cofactor.

Its subcellular location is the cytoplasm. The enzyme catalyses L-threonylcarbamoyladenylate + adenosine(37) in tRNA = N(6)-L-threonylcarbamoyladenosine(37) in tRNA + AMP + H(+). In terms of biological role, required for the formation of a threonylcarbamoyl group on adenosine at position 37 (t(6)A37) in tRNAs that read codons beginning with adenine. Is involved in the transfer of the threonylcarbamoyl moiety of threonylcarbamoyl-AMP (TC-AMP) to the N6 group of A37, together with TsaE and TsaB. TsaD likely plays a direct catalytic role in this reaction. The protein is tRNA N6-adenosine threonylcarbamoyltransferase of Rickettsia akari (strain Hartford).